A 539-amino-acid polypeptide reads, in one-letter code: Eukaryotic translation initiation factor 3 subunit L (539 aa).

Residues 306–514 enclose the PCI domain; it reads TFSDILLYIQ…IHIADTKVSH (209 aa).

This sequence belongs to the eIF-3 subunit L family. Component of the eukaryotic translation initiation factor 3 (eIF-3) complex. The eIF-3 complex interacts with pix.

The protein localises to the cytoplasm. Its function is as follows. Component of the eukaryotic translation initiation factor 3 (eIF-3) complex, which is involved in protein synthesis of a specialized repertoire of mRNAs and, together with other initiation factors, stimulates binding of mRNA and methionyl-tRNAi to the 40S ribosome. The eIF-3 complex specifically targets and initiates translation of a subset of mRNAs involved in cell proliferation. The sequence is that of Eukaryotic translation initiation factor 3 subunit L from Drosophila yakuba (Fruit fly).